Reading from the N-terminus, the 415-residue chain is MTTMSNLPAEVLEEILSRTPVTSLRTMRSTCKKWNNLSKKKIIPEAARKQQGLMLIKKKICSLSFSLHEIHKDDYVVPCINQVDIPRNIEVEKIFHCDGILLCVIEDNCSLLVWNPYLGQTRRIEVSSDADMNDRYALGYDNNNSSHKILRIKKDFKNSDGLGYEIYRFASNSWSLLDEEVMKPEWDVWSVQRSSVSLKGNTYFLLQGNDYDDQEDEEEEDDEEYEDDDDVLPKDNFLLCFDYTTERFGPRLLLPFNPHVEETVALSCIGEERLVMLYQSFKTYKGIEIWVTDKIDPKAVSWSKFLKVDITPLTGFPVDFYADSFVIDEEKKVAAVFDIHCSYQKAHIIGEDGYLKCVNMGRASDVGNGQPLVFSSYVPSLVKVPVKQPKGKRKGRSSETKSNKNKKGRKIKIIG.

The 50-residue stretch at 1-50 (MTTMSNLPAEVLEEILSRTPVTSLRTMRSTCKKWNNLSKKKIIPEAARKQ) folds into the F-box domain. 2 disordered regions span residues 209 to 229 (NDYD…EDDD) and 387 to 415 (KQPK…KIIG). Over residues 210–229 (DYDDQEDEEEEDDEEYEDDD) the composition is skewed to acidic residues. Positions 403-415 (NKNKKGRKIKIIG) are enriched in basic residues.

This chain is F-box protein At3g13820, found in Arabidopsis thaliana (Mouse-ear cress).